The following is a 288-amino-acid chain: ATP synthase gamma chain (288 aa).

This sequence belongs to the ATPase gamma chain family. As to quaternary structure, F-type ATPases have 2 components, CF(1) - the catalytic core - and CF(0) - the membrane proton channel. CF(1) has five subunits: alpha(3), beta(3), gamma(1), delta(1), epsilon(1). CF(0) has three main subunits: a, b and c.

Its subcellular location is the cell inner membrane. Functionally, produces ATP from ADP in the presence of a proton gradient across the membrane. The gamma chain is believed to be important in regulating ATPase activity and the flow of protons through the CF(0) complex. This chain is ATP synthase gamma chain, found in Actinobacillus pleuropneumoniae serotype 5b (strain L20).